Here is a 288-residue protein sequence, read N- to C-terminus: ATP synthase gamma chain (288 aa).

The protein belongs to the ATPase gamma chain family. In terms of assembly, F-type ATPases have 2 components, CF(1) - the catalytic core - and CF(0) - the membrane proton channel. CF(1) has five subunits: alpha(3), beta(3), gamma(1), delta(1), epsilon(1). CF(0) has three main subunits: a, b and c.

The protein localises to the cell membrane. Produces ATP from ADP in the presence of a proton gradient across the membrane. The gamma chain is believed to be important in regulating ATPase activity and the flow of protons through the CF(0) complex. This is ATP synthase gamma chain from Shouchella clausii (strain KSM-K16) (Alkalihalobacillus clausii).